Here is a 376-residue protein sequence, read N- to C-terminus: uncharacterized protein (376 aa).

The helical transmembrane segment at 24–44 (YLSIISIISVFLLNSSIVYSC) threads the bilayer. H251 is a Zn(2+) binding site.

This sequence belongs to the peptidase M23B family. Zn(2+) serves as cofactor.

Its subcellular location is the cell membrane. This is an uncharacterized protein from Buchnera aphidicola subsp. Baizongia pistaciae (strain Bp).